Consider the following 245-residue polypeptide: 2,3-bisphosphoglycerate-dependent phosphoglycerate mutase (245 aa).

Substrate contacts are provided by residues 8–15 (RHGQSLWN), 21–22 (TG), Arg60, 87–90 (ERHY), Lys98, 114–115 (RR), and 183–184 (GN). His9 acts as the Tele-phosphohistidine intermediate in catalysis. Glu87 functions as the Proton donor/acceptor in the catalytic mechanism.

The protein belongs to the phosphoglycerate mutase family. BPG-dependent PGAM subfamily.

The catalysed reaction is (2R)-2-phosphoglycerate = (2R)-3-phosphoglycerate. It functions in the pathway carbohydrate degradation; glycolysis; pyruvate from D-glyceraldehyde 3-phosphate: step 3/5. In terms of biological role, catalyzes the interconversion of 2-phosphoglycerate and 3-phosphoglycerate. This Bacillus cereus (strain AH187) protein is 2,3-bisphosphoglycerate-dependent phosphoglycerate mutase.